Reading from the N-terminus, the 170-residue chain is Ureidoglycolate lyase 1 (170 aa).

Belongs to the ureidoglycolate lyase family. As to quaternary structure, homodimer. Ni(2+) serves as cofactor.

It catalyses the reaction (S)-ureidoglycolate = urea + glyoxylate. It functions in the pathway nitrogen metabolism; (S)-allantoin degradation. Functionally, catalyzes the catabolism of the allantoin degradation intermediate (S)-ureidoglycolate, generating urea and glyoxylate. Involved in the utilization of allantoin as nitrogen source. This is Ureidoglycolate lyase 1 from Rhizobium meliloti (strain 1021) (Ensifer meliloti).